A 397-amino-acid chain; its full sequence is Elongation factor Tu (397 aa).

One can recognise a tr-type G domain in the interval 10–206 (KPHVNIGTIG…AVDTAIPEPE (197 aa)). The interval 19–26 (GHIDHGKT) is G1. 19-26 (GHIDHGKT) is a GTP binding site. Mg(2+) is bound at residue threonine 26. Residues 62–66 (GITIS) form a G2 region. Residues 83-86 (DCPG) form a G3 region. GTP-binding positions include 83–87 (DCPGH) and 138–141 (NKAD). The tract at residues 138-141 (NKAD) is G4. Residues 176–178 (SAL) form a G5 region.

It belongs to the TRAFAC class translation factor GTPase superfamily. Classic translation factor GTPase family. EF-Tu/EF-1A subfamily. In terms of assembly, monomer.

The protein resides in the cytoplasm. The catalysed reaction is GTP + H2O = GDP + phosphate + H(+). In terms of biological role, GTP hydrolase that promotes the GTP-dependent binding of aminoacyl-tRNA to the A-site of ribosomes during protein biosynthesis. The chain is Elongation factor Tu from Kineococcus radiotolerans (strain ATCC BAA-149 / DSM 14245 / SRS30216).